The sequence spans 462 residues: 3-oxoacyl-[acyl-carrier-protein] synthase I, chloroplastic (462 aa).

The transit peptide at 1-35 (MHAHAAHALGLRVPPPAFPRRRARPRRRPAAAVLA) directs the protein to the chloroplast. The segment at 1–45 (MHAHAAHALGLRVPPPAFPRRRARPRRRPAAAVLATSAAPQRETD) is disordered. Residues 19–29 (PRRRARPRRRP) are compositionally biased toward basic residues. Low complexity predominate over residues 30-39 (AAAVLATSAA). The Ketosynthase family 3 (KS3) domain maps to 47 to 459 (RKRVVITGMG…GHNSVVVFAP (413 aa)). Residues cysteine 213, histidine 353, and histidine 389 each act as for beta-ketoacyl synthase activity in the active site.

The protein belongs to the thiolase-like superfamily. Beta-ketoacyl-ACP synthases family. In terms of assembly, homodimer.

Its subcellular location is the plastid. It localises to the chloroplast. The catalysed reaction is a fatty acyl-[ACP] + malonyl-[ACP] + H(+) = a 3-oxoacyl-[ACP] + holo-[ACP] + CO2. In terms of biological role, catalyzes the condensation reaction of fatty acid synthesis by the addition to an acyl acceptor of two carbons from malonyl-ACP. Specific for elongation from C-10 to unsaturated C-16 and C-18 fatty acids. This is 3-oxoacyl-[acyl-carrier-protein] synthase I, chloroplastic (KAS12) from Hordeum vulgare (Barley).